The sequence spans 486 residues: N-succinylglutamate 5-semialdehyde dehydrogenase (486 aa).

An NAD(+)-binding site is contributed by 221–226; sequence GSSATG. Catalysis depends on residues Glu244 and Cys278.

Belongs to the aldehyde dehydrogenase family. AstD subfamily.

The enzyme catalyses N-succinyl-L-glutamate 5-semialdehyde + NAD(+) + H2O = N-succinyl-L-glutamate + NADH + 2 H(+). The protein operates within amino-acid degradation; L-arginine degradation via AST pathway; L-glutamate and succinate from L-arginine: step 4/5. Catalyzes the NAD-dependent reduction of succinylglutamate semialdehyde into succinylglutamate. This chain is N-succinylglutamate 5-semialdehyde dehydrogenase, found in Chromobacterium violaceum (strain ATCC 12472 / DSM 30191 / JCM 1249 / CCUG 213 / NBRC 12614 / NCIMB 9131 / NCTC 9757 / MK).